We begin with the raw amino-acid sequence, 508 residues long: Pyruvate kinase (508 aa).

Arg56 serves as a coordination point for substrate. Residues Asn58, Ser60, Asp90, and Thr91 each contribute to the K(+) site. 58–61 contacts ATP; that stretch reads NFSH. ATP is bound by residues Arg97 and Lys185. Mg(2+) is bound at residue Glu251. Residues Gly274, Asp275, and Thr307 each coordinate substrate. Residue Asp275 participates in Mg(2+) binding.

The protein belongs to the pyruvate kinase family. As to quaternary structure, homotetramer. Mg(2+) is required as a cofactor. It depends on K(+) as a cofactor.

The enzyme catalyses pyruvate + ATP = phosphoenolpyruvate + ADP + H(+). Its pathway is carbohydrate degradation; glycolysis; pyruvate from D-glyceraldehyde 3-phosphate: step 5/5. With respect to regulation, regulated by phosphoenolpyruvate substrate and is allosterically activated by ribose-5-phosphate, AMP and other nucleoside monophosphates but not by fructose-1,6-bisphosphate. This chain is Pyruvate kinase (pyk), found in Mycoplasma genitalium (strain ATCC 33530 / DSM 19775 / NCTC 10195 / G37) (Mycoplasmoides genitalium).